We begin with the raw amino-acid sequence, 347 residues long: Phenylalanine--tRNA ligase alpha subunit (347 aa).

E265 is a binding site for Mg(2+).

It belongs to the class-II aminoacyl-tRNA synthetase family. Phe-tRNA synthetase alpha subunit type 1 subfamily. As to quaternary structure, tetramer of two alpha and two beta subunits. Mg(2+) is required as a cofactor.

The protein resides in the cytoplasm. It carries out the reaction tRNA(Phe) + L-phenylalanine + ATP = L-phenylalanyl-tRNA(Phe) + AMP + diphosphate + H(+). This is Phenylalanine--tRNA ligase alpha subunit from Wolbachia pipientis subsp. Culex pipiens (strain wPip).